A 256-amino-acid polypeptide reads, in one-letter code: NH(3)-dependent NAD(+) synthetase (256 aa).

29–36 serves as a coordination point for ATP; that stretch reads GISGGIDS. Residue Asp-35 coordinates Mg(2+). Arg-115 lines the deamido-NAD(+) pocket. Thr-135 is an ATP binding site. Glu-140 is a Mg(2+) binding site. 2 residues coordinate deamido-NAD(+): Lys-148 and Asp-155. Residues Lys-164 and Ser-186 each coordinate ATP. Deamido-NAD(+) is bound at residue 245–246; it reads HK.

It belongs to the NAD synthetase family. As to quaternary structure, homodimer.

It catalyses the reaction deamido-NAD(+) + NH4(+) + ATP = AMP + diphosphate + NAD(+) + H(+). It participates in cofactor biosynthesis; NAD(+) biosynthesis; NAD(+) from deamido-NAD(+) (ammonia route): step 1/1. Catalyzes the ATP-dependent amidation of deamido-NAD to form NAD. Uses ammonia as a nitrogen source. This Methanosarcina mazei (strain ATCC BAA-159 / DSM 3647 / Goe1 / Go1 / JCM 11833 / OCM 88) (Methanosarcina frisia) protein is NH(3)-dependent NAD(+) synthetase.